A 148-amino-acid chain; its full sequence is Large ribosomal subunit protein bL9 (148 aa).

Belongs to the bacterial ribosomal protein bL9 family.

In terms of biological role, binds to the 23S rRNA. The polypeptide is Large ribosomal subunit protein bL9 (Bacillus cytotoxicus (strain DSM 22905 / CIP 110041 / 391-98 / NVH 391-98)).